A 513-amino-acid polypeptide reads, in one-letter code: 2,3-bisphosphoglycerate-independent phosphoglycerate mutase (513 aa).

2 residues coordinate Mn(2+): Asp-12 and Ser-62. The active-site Phosphoserine intermediate is Ser-62. Residues His-123, Arg-153–Asp-154, Arg-185, Arg-191, Arg-260–Arg-263, and Lys-333 each bind substrate. Residues Asp-400, His-404, Asp-441, His-442, and His-460 each contribute to the Mn(2+) site.

Belongs to the BPG-independent phosphoglycerate mutase family. Monomer. Mn(2+) serves as cofactor.

The enzyme catalyses (2R)-2-phosphoglycerate = (2R)-3-phosphoglycerate. The protein operates within carbohydrate degradation; glycolysis; pyruvate from D-glyceraldehyde 3-phosphate: step 3/5. Catalyzes the interconversion of 2-phosphoglycerate and 3-phosphoglycerate. This is 2,3-bisphosphoglycerate-independent phosphoglycerate mutase from Clostridium tetani (strain Massachusetts / E88).